The primary structure comprises 394 residues: 8-amino-7-oxononanoate synthase (394 aa).

Residue arginine 21 participates in substrate binding. 112-113 (GY) is a pyridoxal 5'-phosphate binding site. Histidine 137 contributes to the substrate binding site. The pyridoxal 5'-phosphate site is built by serine 183, histidine 211, and threonine 239. The residue at position 242 (lysine 242) is an N6-(pyridoxal phosphate)lysine. Threonine 358 contributes to the substrate binding site.

This sequence belongs to the class-II pyridoxal-phosphate-dependent aminotransferase family. BioF subfamily. In terms of assembly, homodimer. Pyridoxal 5'-phosphate serves as cofactor.

The enzyme catalyses 6-carboxyhexanoyl-[ACP] + L-alanine + H(+) = (8S)-8-amino-7-oxononanoate + holo-[ACP] + CO2. The protein operates within cofactor biosynthesis; biotin biosynthesis. Functionally, catalyzes the decarboxylative condensation of pimeloyl-[acyl-carrier protein] and L-alanine to produce 8-amino-7-oxononanoate (AON), [acyl-carrier protein], and carbon dioxide. This Burkholderia thailandensis (strain ATCC 700388 / DSM 13276 / CCUG 48851 / CIP 106301 / E264) protein is 8-amino-7-oxononanoate synthase.